A 689-amino-acid polypeptide reads, in one-letter code: 1,4-alpha-glucan-branching enzyme (689 aa).

2 residues coordinate (1,4-alpha-D-glucosyl)n: Trp-93 and Lys-128. The active-site Nucleophile is Asp-345. The active-site Proton donor is Glu-400.

Belongs to the glycosyl hydrolase 13 family. GlgB subfamily.

It localises to the cytoplasm. The enzyme catalyses Transfers a segment of a (1-&gt;4)-alpha-D-glucan chain to a primary hydroxy group in a similar glucan chain.. It participates in glycan biosynthesis; glycogen biosynthesis. Its function is as follows. Glycogen-branching enzyme participates in the glycogen biosynthetic process along with glycogenin and glycogen synthase. Generates alpha-1,6-glucosidic branches from alpha-1,4-linked glucose chains, to increase solubility of the glycogen polymer. The sequence is that of 1,4-alpha-glucan-branching enzyme (gbeA) from Aspergillus oryzae (strain ATCC 42149 / RIB 40) (Yellow koji mold).